We begin with the raw amino-acid sequence, 256 residues long: MDLENAQNRIIDFIRDETGRAGVKGVVVGISGGIDSALTATLAVKALGKDRVLGIHMPESSLTPAVDSEDAEALADWLGIEYRTIDISGIISAFMAAVPESESADRLTKGNLKARTRMSLLYFHANRLNRMVIGTGNKTEILLGYYTKYGDGGVDLEPIGGLYKTGVWELSSRLGIPESLITKKPSAGLWAGQTDEADLGISYVKVDEVLKMIEDGVEPEVILDKTGISADQLNSVTRRIERNEHKRKAPPVPELY.

Gly29–Ser36 provides a ligand contact to ATP. A Mg(2+)-binding site is contributed by Asp35. Arg115 is a binding site for deamido-NAD(+). Thr135 serves as a coordination point for ATP. Glu140 provides a ligand contact to Mg(2+). Residues Lys148 and Asp155 each contribute to the deamido-NAD(+) site. ATP is bound by residues Lys164 and Ser186. Residue His245–Lys246 participates in deamido-NAD(+) binding.

Belongs to the NAD synthetase family. Homodimer.

The catalysed reaction is deamido-NAD(+) + NH4(+) + ATP = AMP + diphosphate + NAD(+) + H(+). The protein operates within cofactor biosynthesis; NAD(+) biosynthesis; NAD(+) from deamido-NAD(+) (ammonia route): step 1/1. Catalyzes the ATP-dependent amidation of deamido-NAD to form NAD. Uses ammonia as a nitrogen source. This is NH(3)-dependent NAD(+) synthetase from Methanosarcina mazei (strain ATCC BAA-159 / DSM 3647 / Goe1 / Go1 / JCM 11833 / OCM 88) (Methanosarcina frisia).